We begin with the raw amino-acid sequence, 570 residues long: Grayanic acid biosynthesis cluster cytochrome P450 monooxygenase (570 aa).

A helical membrane pass occupies residues 9-29; sequence ILTIFWLPIAAAXLYGAGLAI. N-linked (GlcNAc...) asparagine glycosylation occurs at Asn191. Cys510 provides a ligand contact to heme.

The protein belongs to the cytochrome P450 family. The cofactor is heme.

The protein localises to the membrane. It functions in the pathway secondary metabolite biosynthesis. In terms of biological role, non-reducing polyketide synthase; part of the gene cluster that mediates the biosynthesis of orcinol depsidone grayanic acid (GRA), the only major secondary metabolite known in C.grayi. The first step consists in the ring and depside synthesis by PKS16 leading to 4-O-demethylsphaerophorin, involving different orcinol-like rings, one with acetyl CoA and the other with octanoyl CoA as the starter. Further depsidone formation by the GRA cluster-specific cytochrome P450 leads to 4-O-demethylgrayanic acid. Finally, the cluster specific O-methyltransferase probably converts the 4-O-demethylgrayanic acid into grayanic acid. This chain is Grayanic acid biosynthesis cluster cytochrome P450 monooxygenase, found in Cladonia grayi (Gray's cup lichen).